We begin with the raw amino-acid sequence, 277 residues long: Myelin proteolipid protein (277 aa).

The Cytoplasmic segment spans residues 1–10 (MGLLECCARC). S-palmitoyl cysteine attachment occurs at residues cysteine 6, cysteine 7, and cysteine 10. A helical transmembrane segment spans residues 11 to 36 (LVGAPFASLVATGLCFFGVALFCGCG). Topologically, residues 37–59 (HEALTGTEKLIETYFSKNYQDYE) are extracellular. A helical membrane pass occupies residues 60–88 (YLINVIHAFQYVIYGTASFFFLYGALLLA). The Cytoplasmic portion of the chain corresponds to 89–151 (EGFYTTGAVR…LGKWLGHPDK (63 aa)). Cysteine 109 carries S-palmitoyl cysteine lipidation. Serine 114 is subject to Phosphoserine. 2 positions are modified to phosphothreonine: threonine 116 and threonine 118. 2 S-palmitoyl cysteine lipidation sites follow: cysteine 139 and cysteine 141. The helical transmembrane segment at 152 to 178 (FVGITYALTIVWLLVFACSAVPVYIYF) threads the bilayer. Residues 179–238 (NTWTTCQSIAFPSKTSASIGSLCADARMYGVLPWNAFPGKVCGSNLLSICKTAEFQMTFH) lie on the Extracellular side of the membrane. 2 disulfide bridges follow: cysteine 184–cysteine 228 and cysteine 201–cysteine 220. Residue serine 199 is the site of O-palmitoyl serine attachment. The helical transmembrane segment at 239–268 (LFIAAFVGAAATLVSLLTFMIAATYNFAVL) threads the bilayer. Over 269–277 (KLMGRGTKF) the chain is Cytoplasmic.

The protein belongs to the myelin proteolipid protein family.

Its subcellular location is the cell membrane. It is found in the myelin membrane. Functionally, this is the major myelin protein from the central nervous system. It plays an important role in the formation or maintenance of the multilamellar structure of myelin. This chain is Myelin proteolipid protein (PLP1), found in Canis lupus familiaris (Dog).